Here is a 385-residue protein sequence, read N- to C-terminus: Trans-enoyl reductase poxH (385 aa).

64–67 (QPYS) contributes to the NADP(+) binding site. 156–163 (PDPAAPPI) is a binding site for substrate. NADP(+)-binding positions include 199-202 (STSV), 223-226 (SGTD), tyrosine 241, and 289-290 (LG). 309-313 (HMAPL) is a substrate binding site. 372 to 373 (KR) is a binding site for NADP(+).

This sequence belongs to the zinc-containing alcohol dehydrogenase family. In terms of assembly, monomer.

The protein operates within secondary metabolite biosynthesis. Its function is as follows. Trans-enoyl reductase; part of the gene cluster that mediates the biosynthesis of oxaleimides, cytotoxic compounds containing an unusual disubstituted succinimide moiety. The first step of the pathway is provided by the HR-PKS poxF that serves in a new mode of collaborative biosynthesis with the PKS-NRPS poxE, by providing the olefin containing amino acid substrate via the synthesis of an ACP-bound dec-4-enoate. The cytochrome P450 monooxygenase poxM-catalyzed oxidation at the alpha-position creates the enzyme-bound 2-hydroxydec-4-enoyl-ACP thioester, which may be prone to spontaneous hydrolysis to yield 2-hydroxydec-4-enoic acid due to increased electrophilicity of the carbonyl. 2-hydroxydec-4-enoic acid can then be further oxidized by poxM to yield the alpha-ketoacid 2-oxodec-4-enoicacid, which is reductively aminated by the aminotransferase poxL to yield (S,E)-2-aminodec-4-enoic acid. The Hybrid PKS-NRPS synthetase poxE then performs condensation between the octaketide product of its PKS modules and the amino group of (S,E)-2-aminodec-4-enoic acid which is activated and incorporated by the adenylation domain. The resulting aminoacyl product can be cyclized by the Diels-Alderase PoxQ and reductively released by the reductive (R) domain of poxE to yield an aldehyde intermediate. The released aldehyde is then substrate for a Knoevenagel condensation by the hydrolyase poxO followed by an oxidation at the 5-position of the pyrrolidone ring. The presence of the olefin from the amino acid building block allows for migration of the substituted allyl group to occur. This allylic transposition reaction takes place in a conjugate addition, semipinacol-like fashion to yield a succinimide intermediate. Iterative two-electron oxidations of the C7 methyl of the succinimide intermediate to the carboxylic acid can be catalyzed by one of two remaining cytochrome P450 monooxygenasess poxC or poxD to yield oxaleimide A. Subsequent oxidation yields the maleimide scaffold oxaleimide I. Both oxaleimide A and oxaleimide I can undergo oxidative modifications in the decalin ring to yield the series of products oxaleimides B to H. The chain is Trans-enoyl reductase poxH from Penicillium oxalicum.